The primary structure comprises 133 residues: Small ribosomal subunit protein uS8 (133 aa).

Belongs to the universal ribosomal protein uS8 family. Part of the 30S ribosomal subunit. Contacts proteins S5 and S12.

One of the primary rRNA binding proteins, it binds directly to 16S rRNA central domain where it helps coordinate assembly of the platform of the 30S subunit. The sequence is that of Small ribosomal subunit protein uS8 from Synechococcus sp. (strain CC9605).